The chain runs to 129 residues: uncharacterized protein (129 aa).

At 1-28 (MAGTLFIILRFVDTTLPSSRVYCVRSLE) the chain is on the cytoplasmic side. Residues 29–49 (VSVAVELAAATVLAFESIGVV) traverse the membrane as a helical segment. At 50–54 (DDCGR) the chain is on the extracellular side. The helical transmembrane segment at 55–75 (SVLFSIILIAAFICSVFLIAS) threads the bilayer. The Cytoplasmic portion of the chain corresponds to 76–129 (EDIAGSRRSTGSCVTLWEGRNISFCLYRSNWLNTVPVGYMFFLRKNRSLDERYF).

The protein localises to the membrane. This is an uncharacterized protein from Saccharomyces cerevisiae (strain ATCC 204508 / S288c) (Baker's yeast).